Reading from the N-terminus, the 450-residue chain is Exodeoxyribonuclease 7 large subunit (450 aa).

It belongs to the XseA family. In terms of assembly, heterooligomer composed of large and small subunits.

The protein resides in the cytoplasm. It carries out the reaction Exonucleolytic cleavage in either 5'- to 3'- or 3'- to 5'-direction to yield nucleoside 5'-phosphates.. Functionally, bidirectionally degrades single-stranded DNA into large acid-insoluble oligonucleotides, which are then degraded further into small acid-soluble oligonucleotides. The protein is Exodeoxyribonuclease 7 large subunit of Listeria innocua serovar 6a (strain ATCC BAA-680 / CLIP 11262).